A 676-amino-acid chain; its full sequence is Electrogenic aspartate/glutamate antiporter SLC25A12, mitochondrial (676 aa).

Ala2 bears the N-acetylalanine mark. Positions Ala2–Pro293 are regulatory N-terminal domain. The Mitochondrial intermembrane portion of the chain corresponds to Ala2–Arg328. Asp65, Thr67, Asp69, Leu71, and Glu76 together coordinate Ca(2+). EF-hand domains follow at residues Asp65–Glu76, Ala86–His121, Pro125–Gln155, and Leu157–His192. Residues Leu294 to Gln309 are linker loop domain. Positions Trp319–Leu611 are carrier domain. Solcar repeat units lie at residues Ala323–Lys415, Ile423–Leu507, and Val515–Trp603. The chain crosses the membrane as a helical span at residues Phe329–Ile346. Over Asp347–Arg389 the chain is Mitochondrial matrix. Residues Gly390–Asn409 traverse the membrane as a helical segment. Residues Asp410–Gly432 lie on the Mitochondrial intermembrane side of the membrane. Residues Gly433–Leu446 form a helical membrane-spanning segment. At Glu447–Lys481 the chain is on the mitochondrial matrix side. Residues Gly482 to Tyr501 form a helical membrane-spanning segment. Topologically, residues Ala502–Leu520 are mitochondrial intermembrane. The helical transmembrane segment at Leu521–Ala538 threads the bilayer. At Asp539–Lys577 the chain is on the mitochondrial matrix side. Residues Gly578 to Tyr597 form a helical membrane-spanning segment. The Mitochondrial intermembrane portion of the chain corresponds to Glu598–Gln676. The interval Lys612 to Ala674 is C-terminal domain.

The protein belongs to the mitochondrial carrier (TC 2.A.29) family. Homodimer (via N-terminus).

The protein localises to the mitochondrion inner membrane. The catalysed reaction is L-aspartate(in) + L-glutamate(out) + H(+)(out) = L-aspartate(out) + L-glutamate(in) + H(+)(in). It catalyses the reaction 3-sulfino-L-alanine(out) + L-glutamate(in) + H(+)(in) = 3-sulfino-L-alanine(in) + L-glutamate(out) + H(+)(out). It carries out the reaction 3-sulfino-L-alanine(out) + L-aspartate(in) = 3-sulfino-L-alanine(in) + L-aspartate(out). Its activity is regulated as follows. L-aspartate and 3-sulfino-L-alanine uptake are both inhibited by glisoxepide. Mitochondrial electrogenic aspartate/glutamate antiporter that favors efflux of aspartate and entry of glutamate and proton within the mitochondria as part of the malate-aspartate shuttle. Also mediates the uptake of L-cysteinesulfinate (3-sulfino-L-alanine) by mitochondria in exchange of L-glutamate and proton. Can also exchange L-cysteinesulfinate with aspartate in their anionic form without any proton translocation. Lacks transport activity towards L-glutamine or gamma-aminobutyric acid (GABA). In Rattus norvegicus (Rat), this protein is Electrogenic aspartate/glutamate antiporter SLC25A12, mitochondrial.